The primary structure comprises 757 residues: 5-methyltetrahydropteroyltriglutamate--homocysteine methyltransferase (757 aa).

Residues 17 to 20 (RELK) and lysine 117 each bind 5-methyltetrahydropteroyltri-L-glutamate. Residues 432–434 (IGS) and glutamate 485 each bind L-homocysteine. L-methionine-binding positions include 432-434 (IGS) and glutamate 485. Residues 516–517 (RC) and tryptophan 562 each bind 5-methyltetrahydropteroyltri-L-glutamate. Aspartate 600 serves as a coordination point for L-homocysteine. Residue aspartate 600 coordinates L-methionine. 5-methyltetrahydropteroyltri-L-glutamate is bound at residue glutamate 606. Residues histidine 642, cysteine 644, and glutamate 666 each contribute to the Zn(2+) site. The active-site Proton donor is the histidine 695. Cysteine 727 contributes to the Zn(2+) binding site.

The protein belongs to the vitamin-B12 independent methionine synthase family. The cofactor is Zn(2+).

The catalysed reaction is 5-methyltetrahydropteroyltri-L-glutamate + L-homocysteine = tetrahydropteroyltri-L-glutamate + L-methionine. It participates in amino-acid biosynthesis; L-methionine biosynthesis via de novo pathway; L-methionine from L-homocysteine (MetE route): step 1/1. Catalyzes the transfer of a methyl group from 5-methyltetrahydrofolate to homocysteine resulting in methionine formation. The protein is 5-methyltetrahydropteroyltriglutamate--homocysteine methyltransferase of Erwinia tasmaniensis (strain DSM 17950 / CFBP 7177 / CIP 109463 / NCPPB 4357 / Et1/99).